The primary structure comprises 283 residues: Gap junction beta-1 protein (283 aa).

The Cytoplasmic portion of the chain corresponds to 1-22 (MNWTGLYTLLSGVNRHSTAIGR). A helical membrane pass occupies residues 23 to 45 (VWLSVIFIFRIMVLVVAAESVWG). Residues 46–75 (DEKSSFICNTLQPGCNSVCYDHFFPISHVR) lie on the Extracellular side of the membrane. The chain crosses the membrane as a helical span at residues 76–95 (LWSLQLILVSTPALLVAMHV). Topologically, residues 96 to 130 (AHQQHIEKKMLRLEGHGDPIHLEEVKRHKVHISGT) are cytoplasmic. Residues 131–153 (LWWTYVISVVFRLLFEAAFMYVF) traverse the membrane as a helical segment. The Extracellular segment spans residues 154 to 191 (YLLYPGYAMVRLVKCDAYPCPNTVDCFVSRPTEKTVFT). Residues 192–214 (VFMLAASGICIILNVAEVVYLIV) traverse the membrane as a helical segment. The Cytoplasmic segment spans residues 215–283 (RACARRAQRR…AEKSDRCSAC (69 aa)). Serine 233, serine 258, serine 266, and serine 277 each carry phosphoserine.

The protein belongs to the connexin family. Beta-type (group I) subfamily. As to quaternary structure, a connexon is composed of a hexamer of connexins. Interacts with CNST.

The protein localises to the cell membrane. The protein resides in the cell junction. It localises to the gap junction. Its function is as follows. One gap junction consists of a cluster of closely packed pairs of transmembrane channels, the connexons, through which materials of low MW diffuse from one cell to a neighboring cell. This chain is Gap junction beta-1 protein (GJB1), found in Equus caballus (Horse).